Reading from the N-terminus, the 209-residue chain is Octanoyltransferase (209 aa).

Residues 29-209 form the BPL/LPL catalytic domain; the sequence is GSGDELVWML…KKSFVKIFGE (181 aa). Substrate-binding positions include 68–75, 141–143, and 154–156; these read RGGKYTYH, AIG, and GIA. Cysteine 172 functions as the Acyl-thioester intermediate in the catalytic mechanism.

It belongs to the LipB family.

It is found in the cytoplasm. The catalysed reaction is octanoyl-[ACP] + L-lysyl-[protein] = N(6)-octanoyl-L-lysyl-[protein] + holo-[ACP] + H(+). Its pathway is protein modification; protein lipoylation via endogenous pathway; protein N(6)-(lipoyl)lysine from octanoyl-[acyl-carrier-protein]: step 1/2. Its function is as follows. Catalyzes the transfer of endogenously produced octanoic acid from octanoyl-acyl-carrier-protein onto the lipoyl domains of lipoate-dependent enzymes. Lipoyl-ACP can also act as a substrate although octanoyl-ACP is likely to be the physiological substrate. This is Octanoyltransferase from Neorickettsia sennetsu (strain ATCC VR-367 / Miyayama) (Ehrlichia sennetsu).